The chain runs to 547 residues: Methionine--tRNA ligase (547 aa).

A 'HIGH' region motif is present at residues 13–23 (PYANGPLHIGH). Residues Cys145, Cys148, Cys158, and Cys161 each coordinate Zn(2+). The 'KMSKS' region motif lies at 334 to 338 (QFSKS). Residue Lys337 participates in ATP binding.

This sequence belongs to the class-I aminoacyl-tRNA synthetase family. MetG type 1 subfamily. It depends on Zn(2+) as a cofactor.

The protein localises to the cytoplasm. The catalysed reaction is tRNA(Met) + L-methionine + ATP = L-methionyl-tRNA(Met) + AMP + diphosphate. Is required not only for elongation of protein synthesis but also for the initiation of all mRNA translation through initiator tRNA(fMet) aminoacylation. In Thermoplasma acidophilum (strain ATCC 25905 / DSM 1728 / JCM 9062 / NBRC 15155 / AMRC-C165), this protein is Methionine--tRNA ligase.